The chain runs to 467 residues: Nuclear distribution protein nudF (467 aa).

A LisH domain is found at 9 to 41 (QAEELHKSIIAYLASVNLTESSAALRAELGDSV). Residues 60-87 (TSVVRLQKKIMDLESRCAALQSELDSAT) adopt a coiled-coil conformation. WD repeat units follow at residues 113–154 (GHRN…RTVK), 156–196 (HTKA…KNIR), 200–247 (GHDH…CVKT), 250–289 (GHVD…TKST), 292–352 (GHEH…IKTL), 354–393 (GHDN…KCVR), 398–428 (AHGH…NGTP), and 429–466 (AATS…RIFA). Residues 417 to 439 (GANGEAETNGTPAATSTTNGVRP) form a disordered region. Residues 422–436 (AETNGTPAATSTTNG) show a composition bias toward polar residues.

The protein belongs to the WD repeat LIS1/nudF family. In terms of assembly, self-associates. Interacts with nudE and dynein.

It is found in the cytoplasm. It localises to the cytoskeleton. The protein resides in the spindle pole. Functionally, positively regulates the activity of the minus-end directed microtubule motor protein dynein. May enhance dynein-mediated microtubule sliding by targeting dynein to the microtubule plus end. Required for nuclear migration during vegetative growth as well as development. Required for retrograde early endosome (EE) transport from the hyphal tip. Required for localization of dynein to the mitotic spindle poles. Recruits additional proteins to the dynein complex at SPBs. This chain is Nuclear distribution protein nudF, found in Aspergillus fumigatus (strain CBS 144.89 / FGSC A1163 / CEA10) (Neosartorya fumigata).